Here is a 449-residue protein sequence, read N- to C-terminus: NADH-quinone oxidoreductase subunit H (449 aa).

Helical transmembrane passes span 26 to 46, 96 to 116, 136 to 156, 177 to 197, 211 to 231, 259 to 279, 298 to 318, 330 to 350, and 365 to 385; these read FWLI…MTLF, PIFI…FAVI, LPVS…GLIL, IISY…YAGT, WYIA…GETN, FFFL…TTLF, WVPL…FIWL, FMAF…LVIA, and WLIG…LDPG. The tract at residues 396–449 is disordered; that stretch reads AERRKLAEAPSLESIPWPPPPPGGAHHRPAVPAGTSANGSSTVIPADPPPRQES.

Belongs to the complex I subunit 1 family. In terms of assembly, NDH-1 is composed of 14 different subunits. Subunits NuoA, H, J, K, L, M, N constitute the membrane sector of the complex.

The protein localises to the cell membrane. The catalysed reaction is a quinone + NADH + 5 H(+)(in) = a quinol + NAD(+) + 4 H(+)(out). Functionally, NDH-1 shuttles electrons from NADH, via FMN and iron-sulfur (Fe-S) centers, to quinones in the respiratory chain. The immediate electron acceptor for the enzyme in this species is believed to be ubiquinone. Couples the redox reaction to proton translocation (for every two electrons transferred, four hydrogen ions are translocated across the cytoplasmic membrane), and thus conserves the redox energy in a proton gradient. This subunit may bind ubiquinone. This Frankia alni (strain DSM 45986 / CECT 9034 / ACN14a) protein is NADH-quinone oxidoreductase subunit H.